A 348-amino-acid polypeptide reads, in one-letter code: Anthranilate phosphoribosyltransferase (348 aa).

Residues G89, 92 to 93 (GD), T97, 99 to 102 (NIST), 117 to 125 (KHGNRSVSS), and S129 each bind 5-phospho-alpha-D-ribose 1-diphosphate. G89 lines the anthranilate pocket. S101 contacts Mg(2+). Anthranilate is bound at residue N120. Anthranilate is bound at residue R175. Positions 233 and 234 each coordinate Mg(2+).

This sequence belongs to the anthranilate phosphoribosyltransferase family. As to quaternary structure, homodimer. Mg(2+) is required as a cofactor.

The enzyme catalyses N-(5-phospho-beta-D-ribosyl)anthranilate + diphosphate = 5-phospho-alpha-D-ribose 1-diphosphate + anthranilate. Its pathway is amino-acid biosynthesis; L-tryptophan biosynthesis; L-tryptophan from chorismate: step 2/5. Its function is as follows. Catalyzes the transfer of the phosphoribosyl group of 5-phosphorylribose-1-pyrophosphate (PRPP) to anthranilate to yield N-(5'-phosphoribosyl)-anthranilate (PRA). In Shewanella sp. (strain W3-18-1), this protein is Anthranilate phosphoribosyltransferase.